A 705-amino-acid chain; its full sequence is Calpastatin (705 aa).

Disordered regions lie at residues 1-211 (MNPT…PNDA) and 226-493 (LTTC…PLPP). 2 stretches are compositionally biased toward basic and acidic residues: residues 7 to 17 (KAVKTEPEKKP) and 24 to 62 (VVHEKKTQEVKPKEHTEPKSLPKHSSDTGVKHAPKEKAV). A Glycyl lysine isopeptide (Lys-Gly) (interchain with G-Cter in SUMO2) cross-link involves residue lysine 10. Position 28 is an N6-acetyllysine (lysine 28). 2 stretches are compositionally biased toward low complexity: residues 63–72 (SKSSEQPPSE) and 94–103 (PAAAAAASAE). The residue at position 65 (serine 65) is a Phosphoserine. The residue at position 115 (threonine 115) is a Phosphothreonine. Positions 135–151 (TALDDLIDTLGEPEEMK) are enriched in acidic residues. An Inhibitory domain 1 repeat occupies 149-202 (EMKEDNTTYTGPEVSDPMSSTYIEELGKRESTPPPKYKELLNKEEGIAGPPPDS). Over residues 173–194 (ELGKRESTPPPKYKELLNKEEG) the composition is skewed to basic and acidic residues. 2 positions are modified to phosphoserine: serine 202 and serine 230. Residues 234 to 248 (DGKETEKEKSTEEAL) are compositionally biased toward basic and acidic residues. Positions 275–286 (TEQALQALSASL) are enriched in polar residues. Basic and acidic residues-rich tracts occupy residues 289–317 (RKPEPELDPSSIREVDEAKAKEEKVKKCG) and 327–352 (YRLKPATDKDGKPLLPEAEEKPKPLS). Residues 292–344 (EPELDPSSIREVDEAKAKEEKVKKCGEDEETVPSEYRLKPATDKDGKPLLPEA) form an Inhibitory domain 2 repeat. A phosphoserine mark is found at serine 352, serine 354, and serine 361. Residues 355–364 (ELIDELSEDF) show a composition bias toward acidic residues. Residues 365–381 (DQSKPTEKQSKPTEKTE) are compositionally biased toward basic and acidic residues. Serine 428 is subject to Phosphoserine. The segment covering 430–489 (PKKEADPEDGKPVEDKVKEKAKEEDRENFGEKEETIPPDYRLEEAKDKDGKPLLPKEVKE) has biased composition (basic and acidic residues). The Inhibitory domain 3 repeat unit spans residues 434–487 (ADPEDGKPVEDKVKEKAKEEDRENFGEKEETIPPDYRLEEAKDKDGKPLLPKEV). A phosphoserine mark is found at serine 504 and serine 515. The tract at residues 527-705 (VSEVVSQTPA…KPKADGKSTS (179 aa)) is disordered. The segment covering 533-542 (QTPAPTTQAA) has biased composition (low complexity). Serine 563 is subject to Phosphoserine. The Inhibitory domain 4 repeat unit spans residues 571–624 (PDPDENKPVEDKVKEKAKAEHRDKLGERDDTIPPKYQHLLDDNKEGTPGKPKDQ). Basic and acidic residues predominate over residues 571 to 625 (PDPDENKPVEDKVKEKAKAEHRDKLGERDDTIPPKYQHLLDDNKEGTPGKPKDQR). Residues 651–662 (DSCPSTTETSTD) are compositionally biased toward low complexity. The segment covering 683-705 (KAKDSTKAKEETSKPKADGKSTS) has biased composition (basic and acidic residues).

It belongs to the protease inhibitor I27 (calpastatin) family.

Its function is as follows. Specific inhibition of calpain (calcium-dependent cysteine protease). Plays a key role in postmortem tenderization of meat and have been proposed to be involved in muscle protein degradation in living tissue. This Bos taurus (Bovine) protein is Calpastatin (CAST).